An 84-amino-acid chain; its full sequence is Large ribosomal subunit protein bL31B (84 aa).

The protein belongs to the bacterial ribosomal protein bL31 family. Type B subfamily. As to quaternary structure, part of the 50S ribosomal subunit.

This Photorhabdus laumondii subsp. laumondii (strain DSM 15139 / CIP 105565 / TT01) (Photorhabdus luminescens subsp. laumondii) protein is Large ribosomal subunit protein bL31B.